A 93-amino-acid polypeptide reads, in one-letter code: Alpha-defensin 6/12 (93 aa).

The N-terminal stretch at 1–19 (MKTLILLSALVLLAFQVQA) is a signal peptide. The propeptide occupies 20–60 (DPIQNTDEETKTEEQPGEEDQAVSVSFGDPEGTSLQEESLR). A disordered region spans residues 23–54 (QNTDEETKTEEQPGEEDQAVSVSFGDPEGTSL). 3 disulfides stabilise this stretch: C64–C92, C66–C81, and C71–C91.

It belongs to the alpha-defensin family. Paneth cells of the small bowel.

Its subcellular location is the secreted. Has broad-spectrum antimicrobial properties. Has antibacterial activity against the Gram-positive bacterium L.monocytogenes EGD and the Gram-negative bacteria E.coli ML-35p and avirulent S.typhimurium 7953, but not against the mouse-virulent S.typhimurium 14028S. Probably contributes to the antimicrobial barrier function of the small bowel mucosa. This Mus musculus (Mouse) protein is Alpha-defensin 6/12 (Defa6).